Consider the following 372-residue polypeptide: tRNA-specific 2-thiouridylase MnmA (372 aa).

ATP-binding positions include 16-23 (GMSGGVDS) and methionine 42. The interval 102–104 (NPD) is interaction with target base in tRNA. Catalysis depends on cysteine 107, which acts as the Nucleophile. An intrachain disulfide couples cysteine 107 to cysteine 205. An ATP-binding site is contributed by glycine 132. An interaction with tRNA region spans residues 155 to 157 (KDQ). The active-site Cysteine persulfide intermediate is cysteine 205. The segment at 317-318 (RY) is interaction with tRNA.

This sequence belongs to the MnmA/TRMU family.

It localises to the cytoplasm. It catalyses the reaction S-sulfanyl-L-cysteinyl-[protein] + uridine(34) in tRNA + AH2 + ATP = 2-thiouridine(34) in tRNA + L-cysteinyl-[protein] + A + AMP + diphosphate + H(+). Catalyzes the 2-thiolation of uridine at the wobble position (U34) of tRNA, leading to the formation of s(2)U34. This chain is tRNA-specific 2-thiouridylase MnmA, found in Shewanella sp. (strain MR-4).